Here is a 304-residue protein sequence, read N- to C-terminus: Putative S-adenosyl-L-methionine-dependent methyltransferase MAV_1058 (304 aa).

Residues Asp128 and 157–158 each bind S-adenosyl-L-methionine; that span reads DL.

Belongs to the UPF0677 family.

Functionally, exhibits S-adenosyl-L-methionine-dependent methyltransferase activity. This chain is Putative S-adenosyl-L-methionine-dependent methyltransferase MAV_1058, found in Mycobacterium avium (strain 104).